The sequence spans 268 residues: Hydroxyethylthiazole kinase (268 aa).

Residue M45 participates in substrate binding. The ATP site is built by R121 and T167. G194 provides a ligand contact to substrate.

Belongs to the Thz kinase family. Mg(2+) serves as cofactor.

It carries out the reaction 5-(2-hydroxyethyl)-4-methylthiazole + ATP = 4-methyl-5-(2-phosphooxyethyl)-thiazole + ADP + H(+). Its pathway is cofactor biosynthesis; thiamine diphosphate biosynthesis; 4-methyl-5-(2-phosphoethyl)-thiazole from 5-(2-hydroxyethyl)-4-methylthiazole: step 1/1. Its function is as follows. Catalyzes the phosphorylation of the hydroxyl group of 4-methyl-5-beta-hydroxyethylthiazole (THZ). This Bacillus cereus (strain Q1) protein is Hydroxyethylthiazole kinase.